Consider the following 64-residue polypeptide: Large ribosomal subunit protein bL28 (64 aa).

Residues 1–23 (MARKDQISHRGPLSGNNRSHALN) are disordered.

This sequence belongs to the bacterial ribosomal protein bL28 family.

This Mesomycoplasma hyopneumoniae (strain 232) (Mycoplasma hyopneumoniae) protein is Large ribosomal subunit protein bL28.